Here is a 210-residue protein sequence, read N- to C-terminus: Uracil phosphoribosyltransferase (210 aa).

5-phospho-alpha-D-ribose 1-diphosphate is bound by residues R80, R105, and 132–140; that span reads DPMLATGGS. Uracil is bound by residues I195 and 200-202; that span reads GDA. D201 is a binding site for 5-phospho-alpha-D-ribose 1-diphosphate.

It belongs to the UPRTase family. Requires Mg(2+) as cofactor.

It carries out the reaction UMP + diphosphate = 5-phospho-alpha-D-ribose 1-diphosphate + uracil. It participates in pyrimidine metabolism; UMP biosynthesis via salvage pathway; UMP from uracil: step 1/1. With respect to regulation, allosterically activated by GTP. In terms of biological role, catalyzes the conversion of uracil and 5-phospho-alpha-D-ribose 1-diphosphate (PRPP) to UMP and diphosphate. The chain is Uracil phosphoribosyltransferase from Deinococcus radiodurans (strain ATCC 13939 / DSM 20539 / JCM 16871 / CCUG 27074 / LMG 4051 / NBRC 15346 / NCIMB 9279 / VKM B-1422 / R1).